Here is a 2472-residue protein sequence, read N- to C-terminus: Spectrin alpha chain, non-erythrocytic 1 (2472 aa).

M1 carries the post-translational modification N-acetylmethionine. Spectrin repeat units lie at residues 45–146 (RFQF…IKLL), 150–251 (KLVQ…QGKL), 256–358 (EVQR…ARLD), 361–465 (YRLQ…QYEQ), 468–570 (DLQL…AQLA), 574–676 (HLQQ…KLRE), 679–781 (QQQQ…QKLA), 785–888 (RLQQ…DLED), and 891–961 (QAQQ…QQVA). Position 587 is a phosphoserine (S587). K637 carries the post-translational modification N6-acetyllysine. K803 carries the post-translational modification N6-acetyllysine. Residues S924, S982, S999, S1029, S1031, and S1041 each carry the phosphoserine modification. The region spanning 967 to 1026 (TGKELVLALYDYQEKSPREVTMKKGDILTLLNSTNKDWWKVEVNDRQGFVPAAYVKKLDP) is the SH3 domain. Residues 1096 to 1166 (LFREANELQQ…LESEGLMAEE (71 aa)) form a Spectrin 10 repeat. Y1176 carries the phosphotyrosine modification. Residues S1190, S1207, S1217, S1291, S1306, S1323, and S1338 each carry the phosphoserine modification. The Spectrin 11 repeat unit spans residues 1233-1336 (HEVQRFHRDA…RADQRKAKLG (104 aa)). Spectrin repeat units follow at residues 1339 to 1441 (HDLQ…RMML) and 1446 to 1549 (ELQL…KLGE). K1519 is modified (N6-acetyllysine). Phosphoserine is present on residues S1550, S1557, S1578, S1615, and S1647. Spectrin repeat units follow at residues 1552–1656 (TLQQ…KLKE), 1659–1762 (KQQN…KLSE), 1764–1868 (HRLH…RLEE), 1871–1974 (EYQQ…KLDE), 1978–2081 (FLQF…KLLE), 2092–2194 (LFLT…LELQ), and 2206–2310 (LRQE…NLEQ). T2020 carries the post-translational modification Phosphothreonine. K2052 is subject to N6-acetyllysine. At T2066 the chain carries Phosphothreonine. 3 consecutive EF-hand domains span residues 2323–2358 (EALK…LGYD), 2366–2401 (EPDP…RETE), and 2404–2439 (KSSE…EQAD). Residues D2336, D2338, S2340, R2342, E2347, D2379, N2381, D2383, H2385, and E2390 each contribute to the Ca(2+) site. N6-acetyllysine is present on K2421.

Belongs to the spectrin family. Like erythrocyte spectrin, the spectrin-like proteins are capable of forming dimers which can further associate to tetramers. Interacts (via C-terminal spectrin repeats) with TRPC4. Interacts with CALM and EMD. Interacts with isoform 1 of ACP1. Identified in a complex with ACTN4, CASK, IQGAP1, MAGI2, NPHS1 and SPTBN1. Interacts with SHANK3 (via ANK repeats). Interacts with CLN3; this interaction regulates the fodrin localization at the plasma membrane. In terms of processing, phosphorylation of Tyr-1176 decreases sensitivity to cleavage by calpain in vitro.

Its subcellular location is the cytoplasm. The protein resides in the cytoskeleton. The protein localises to the cell cortex. Its function is as follows. Fodrin, which seems to be involved in secretion, interacts with calmodulin in a calcium-dependent manner and is thus candidate for the calcium-dependent movement of the cytoskeleton at the membrane. This chain is Spectrin alpha chain, non-erythrocytic 1 (Sptan1), found in Mus musculus (Mouse).